The sequence spans 245 residues: uncharacterized protein (245 aa).

A compositionally biased stretch (basic and acidic residues) spans 162–174 (KEQSDVTTSERTR). The tract at residues 162-183 (KEQSDVTTSERTRSPPGSSKTT) is disordered.

This is an uncharacterized protein from Homo sapiens (Human).